A 538-amino-acid chain; its full sequence is AAA ATPase forming ring-shaped complexes (538 aa).

A coiled-coil region spans residues 14–54 (ARELRLANHRLGAQNEKLTEALKASREKLAEINSRLADMAE). Residue 240 to 245 (GNGKTL) participates in ATP binding.

It belongs to the AAA ATPase family. Homohexamer. Assembles into a hexameric ring structure.

The sequence is that of AAA ATPase forming ring-shaped complexes from Corynebacterium urealyticum (strain ATCC 43042 / DSM 7109).